A 200-amino-acid chain; its full sequence is ATP-dependent Clp protease proteolytic subunit (200 aa).

Ser103 (nucleophile) is an active-site residue. His128 is an active-site residue.

The protein belongs to the peptidase S14 family. Fourteen ClpP subunits assemble into 2 heptameric rings which stack back to back to give a disk-like structure with a central cavity, resembling the structure of eukaryotic proteasomes.

Its subcellular location is the cytoplasm. The enzyme catalyses Hydrolysis of proteins to small peptides in the presence of ATP and magnesium. alpha-casein is the usual test substrate. In the absence of ATP, only oligopeptides shorter than five residues are hydrolyzed (such as succinyl-Leu-Tyr-|-NHMec, and Leu-Tyr-Leu-|-Tyr-Trp, in which cleavage of the -Tyr-|-Leu- and -Tyr-|-Trp bonds also occurs).. Functionally, cleaves peptides in various proteins in a process that requires ATP hydrolysis. Has a chymotrypsin-like activity. Plays a major role in the degradation of misfolded proteins. The chain is ATP-dependent Clp protease proteolytic subunit from Vibrio parahaemolyticus serotype O3:K6 (strain RIMD 2210633).